The chain runs to 151 residues: Arginine repressor (151 aa).

Belongs to the ArgR family.

Its subcellular location is the cytoplasm. It functions in the pathway amino-acid biosynthesis; L-arginine biosynthesis [regulation]. Functionally, regulates arginine biosynthesis genes. This Haemophilus influenzae (strain PittGG) protein is Arginine repressor.